The chain runs to 203 residues: Calcineurin B-like protein 5 (203 aa).

A lipid anchor (N-myristoyl glycine) is attached at Gly2. 4 consecutive EF-hand domains span residues 30-65 (EVEVLHGLFIKLTSCLSNDNLLTKEKFQFILIKNTK), 66-101 (KRSLSAERIFGLFDMRNDGAIDFGEFVHTLNIFHPN), 103-138 (SPRDKAIFAFRLYDTRETGFIEPEEVKEMIIDVLEE), and 147-182 (IIDSIVSKTFEEADWKKDGIIDLEEWENFVATYPLT).

This sequence belongs to the calcineurin regulatory subunit family. In terms of assembly, homodimer. Interacts with PP2CA, CIPK2, CIPK11, CIPK23 and CIPK24. In terms of processing, both N-myristoylation and calcium-mediated conformational changes are essential for its function. Expressed in green tissues, but not in the roots.

It is found in the cytoplasm. Its subcellular location is the nucleus. In terms of biological role, acts as a calcium sensor. CBL proteins interact with CIPK serine-threonine protein kinases. Binding of a CBL protein to the regulatory NAF domain of a CIPK protein lead to the activation of the kinase in a calcium-dependent manner. May function as a positive regulator of salt or drought responses. In Arabidopsis thaliana (Mouse-ear cress), this protein is Calcineurin B-like protein 5 (CBL5).